The primary structure comprises 449 residues: Tubulin alpha chain (449 aa).

The MREC motif signature appears at methionine 1 to cysteine 4. Glutamine 11 is a GTP binding site. Lysine 40 bears the N6-acetyllysine mark. The GTP site is built by glutamate 71, serine 140, glycine 144, threonine 145, threonine 179, asparagine 206, and asparagine 228. Mg(2+) is bound at residue glutamate 71. Residue glutamate 254 is part of the active site. The residue at position 443 (glutamate 443) is a 5-glutamyl polyglutamate.

The protein belongs to the tubulin family. As to quaternary structure, dimer of alpha and beta chains. A typical microtubule is a hollow water-filled tube with an outer diameter of 25 nm and an inner diameter of 15 nM. Alpha-beta heterodimers associate head-to-tail to form protofilaments running lengthwise along the microtubule wall with the beta-tubulin subunit facing the microtubule plus end conferring a structural polarity. Microtubules usually have 13 protofilaments but different protofilament numbers can be found in some organisms and specialized cells. It depends on Mg(2+) as a cofactor. Some glutamate residues at the C-terminus are polyglycylated, resulting in polyglycine chains on the gamma-carboxyl group. Glycylation is mainly limited to tubulin incorporated into axonemes (cilia and flagella) whereas glutamylation is prevalent in neuronal cells, centrioles, axonemes, and the mitotic spindle. Both modifications can coexist on the same protein on adjacent residues, and lowering polyglycylation levels increases polyglutamylation, and reciprocally. The precise function of polyglycylation is still unclear. Post-translationally, some glutamate residues at the C-terminus are polyglutamylated, resulting in polyglutamate chains on the gamma-carboxyl group. Polyglutamylation plays a key role in microtubule severing by spastin (SPAST). SPAST preferentially recognizes and acts on microtubules decorated with short polyglutamate tails: severing activity by SPAST increases as the number of glutamates per tubulin rises from one to eight, but decreases beyond this glutamylation threshold. In terms of processing, acetylation of alpha chains at Lys-40 is located inside the microtubule lumen. This modification has been correlated with increased microtubule stability, intracellular transport and ciliary assembly. Undergoes a tyrosination/detyrosination cycle, the cyclic removal and re-addition of a C-terminal tyrosine residue by the enzymes tubulin tyrosine carboxypeptidase (MATCAP1, VASH1 or VASH2) and tubulin tyrosine ligase (TTL), respectively. Post-translationally, tyrosination promotes microtubule interaction with CAP-Gly microtubule plus-end tracking proteins. Tyrosinated tubulins regulate the initiation of dynein-driven motility. In terms of processing, detyrosination is involved in metaphase plate congression by guiding chromosomes during mitosis. Detyrosination increases microtubules-dependent mechanotransduction in dystrophic cardiac and skeletal muscle. In cardiomyocytes, detyrosinated microtubules are required to resist to contractile compression during contraction.

The protein localises to the cytoplasm. The protein resides in the cytoskeleton. The enzyme catalyses GTP + H2O = GDP + phosphate + H(+). Its function is as follows. Tubulin is the major constituent of microtubules, a cylinder consisting of laterally associated linear protofilaments composed of alpha- and beta-tubulin heterodimers. Microtubules grow by the addition of GTP-tubulin dimers to the microtubule end, where a stabilizing cap forms. Below the cap, tubulin dimers are in GDP-bound state, owing to GTPase activity of alpha-tubulin. This Xenopus tropicalis (Western clawed frog) protein is Tubulin alpha chain (tuba).